The following is an 833-amino-acid chain: Multiphosphoryl transfer protein 2 (833 aa).

The HPr domain occupies 2–91 (ALIVEFICEL…QWLRDEFPHC (90 aa)). H16 functions as the Tele-phosphohistidine intermediate; for HPr activity in the catalytic mechanism. H16 is modified (phosphohistidine; by EI). The segment at 143 to 653 (LGNLPAAKGV…AAKARMAQLD (511 aa)) is PTS EI. H301 (tele-phosphohistidine intermediate; for PTS EI activity) is an active-site residue. H301 is modified (phosphohistidine; by autocatalysis). Residues R408 and R444 each contribute to the phosphoenolpyruvate site. The Mg(2+) site is built by E543 and D567. Phosphoenolpyruvate is bound by residues 566–567 (ND) and R577. C614 functions as the Proton donor; for EI activity in the catalytic mechanism. The PTS EIIA type-2 domain occupies 688–830 (PLVTAECITL…DAIASLLQHE (143 aa)). Residue H750 is the Tele-phosphohistidine intermediate; for PTS EIIA activity of the active site. Position 750 is a phosphohistidine; by HPr (H750).

Belongs to the PEP-utilizing enzyme family. The cofactor is Mg(2+).

It localises to the cytoplasm. The enzyme catalyses L-histidyl-[protein] + phosphoenolpyruvate = N(pros)-phospho-L-histidyl-[protein] + pyruvate. The catalysed reaction is D-fructose(out) + N(pros)-phospho-L-histidyl-[protein] = D-fructose 1-phosphate(in) + L-histidyl-[protein]. Multifunctional protein that includes general (non sugar-specific) and sugar-specific components of the phosphoenolpyruvate-dependent sugar phosphotransferase system (sugar PTS). This major carbohydrate active transport system catalyzes the phosphorylation of incoming sugar substrates concomitantly with their translocation across the cell membrane. The enzyme II FrwABC PTS system is involved in fructose transport. The protein is Multiphosphoryl transfer protein 2 of Escherichia coli (strain K12).